The sequence spans 861 residues: Protein argonaute-3 (861 aa).

The residue at position 1 (M1) is an N-acetylmethionine. The region spanning 230-349 (PVIQFMCEVL…LPLEVCNIVA (120 aa)) is the PAZ domain. A Piwi domain is found at 518-820 (LIIVILPGKT…VAFRARYHLV (303 aa)). An interaction with guide RNA region spans residues 530–567 (YAEVKRVGDTLLGMATQCVQVKNVIKTSPQTLSNLCLK). A divalent metal cation is bound by residues D598, E638, and D670. Residues 758 to 806 (QGTSRPSHYHVLWDDNCFTADELQLLTYQPSAHTYVHCTRSVSIPAPAY) are interaction with guide RNA. An a divalent metal cation-binding site is contributed by H809. The interval 824–847 (RDSAEGSHVSGQSNGRDPQALAKA) is disordered. S826 carries the phosphoserine modification.

Belongs to the argonaute family. Ago subfamily. As to quaternary structure, interacts with EIF4B, IMP8, PRMT5 and TNRC6B. Interacts with APOBEC3F, APOBEC3G and APOBEC3H. Interacts with EDC4. Ubiquitinated on surface-exposed lysines by a SCF-like E3 ubiquitin-protein ligase complex containing ZSWIM8 during target-directed microRNA degradation (TDMD), a process that mediates degradation of microRNAs (miRNAs). Ubiquitination by the SCF-like E3 ubiquitin-protein ligase complex containing ZSWIM8 leads to its subsequent degradation, thereby exposing miRNAs for degradation. ZSWIM8 recognizes and binds AGO3 when it is engaged with a TDMD target.

It is found in the cytoplasm. The protein resides in the P-body. The enzyme catalyses Endonucleolytic cleavage to 5'-phosphomonoester.. Required for RNA-mediated gene silencing (RNAi). Binds to short RNAs such as microRNAs (miRNAs) and represses the translation of mRNAs which are complementary to them. Proposed to be involved in stabilization of small RNA derivates (siRNA) derived from processed RNA polymerase III-transcribed Alu repeats containing a DR2 retinoic acid response element (RARE) in stem cells and in the subsequent siRNA-dependent degradation of a subset of RNA polymerase II-transcribed coding mRNAs by recruiting a mRNA decapping complex involving EDC4. Possesses RNA slicer activity but only on select RNAs bearing 5'- and 3'-flanking sequences to the region of guide-target complementarity. In Bos taurus (Bovine), this protein is Protein argonaute-3 (AGO3).